A 279-amino-acid polypeptide reads, in one-letter code: Expansin-A22 (279 aa).

The first 27 residues, 1 to 27 (MKLLEKMIYVEFLMIIMVIWVVPMSYG), serve as a signal peptide directing secretion. The Expansin-like EG45 domain occupies 76 to 186 (QGACGYGNLF…RRIPCSKTGG (111 aa)). The Expansin-like CBD domain maps to 196 to 275 (YFLMVLIYNV…NWGFGQTFDG (80 aa)).

The protein belongs to the expansin family. Expansin A subfamily.

It localises to the secreted. The protein localises to the cell wall. It is found in the membrane. Its function is as follows. Causes loosening and extension of plant cell walls by disrupting non-covalent bonding between cellulose microfibrils and matrix glucans. No enzymatic activity has been found. The chain is Expansin-A22 (EXPA22) from Arabidopsis thaliana (Mouse-ear cress).